A 288-amino-acid polypeptide reads, in one-letter code: MPRTPHLLAIQSHVVFGHAGNAAAVFPMQRIGINVWPLNTVQFSNHTQYGQWTGQVLPPEQIPALVDGIAGIGELGNCDAVLSGYLGSAAQGRAILDVVARIKQANPRALYLCDPVMGHPEKGCIVAPEVSDFLLEEAAAVADYLCPNQLELDSFCDRQPNSLADCVEMARSLLARGPRAILVKHLNYPGKAGDTFEMLLVAADQAWHLQRPLLAFPRQPVGVGDLASGLFLSRLLLGDDLRNAFEFAGAAVHEVLLETQACGSYELELVRAQDRIAHPRVRFDAVRL.

Substrate-binding positions include serine 12 and 47–48 (TQ). Residues aspartate 114, glutamate 151, lysine 184, and 211–214 (RPLL) each bind ATP. Aspartate 225 contacts substrate.

Belongs to the pyridoxine kinase family. PdxY subfamily. In terms of assembly, homodimer. It depends on Mg(2+) as a cofactor.

The catalysed reaction is pyridoxal + ATP = pyridoxal 5'-phosphate + ADP + H(+). Its pathway is cofactor metabolism; pyridoxal 5'-phosphate salvage; pyridoxal 5'-phosphate from pyridoxal: step 1/1. Pyridoxal kinase involved in the salvage pathway of pyridoxal 5'-phosphate (PLP). Catalyzes the phosphorylation of pyridoxal to PLP. This Pseudomonas aeruginosa (strain UCBPP-PA14) protein is Pyridoxal kinase PdxY.